The sequence spans 370 residues: uncharacterized protein (370 aa).

A divalent metal cation contacts are provided by aspartate 152, histidine 154, aspartate 184, asparagine 215, histidine 306, and histidine 308.

This sequence belongs to the metallophosphoesterase superfamily. A divalent metal cation is required as a cofactor.

This is an uncharacterized protein from Helicobacter pylori (strain J99 / ATCC 700824) (Campylobacter pylori J99).